A 253-amino-acid polypeptide reads, in one-letter code: Discoidin-1 subunit B/C (253 aa).

Ser2 is subject to N-acetylserine. Residues 2 to 152 (STQGLVQLIS…ISLRCEFYTQ (151 aa)) form the F5/8 type C domain. The Cell attachment site motif lies at 79–81 (RGD).

As to quaternary structure, tetramer of four different chains (A to D). As to expression, stalk cells.

It localises to the cytoplasm. Its function is as follows. Galactose- and N-acetylgalactosamine-binding lectin. May play a role in cell-substratum adhesion rather than in cell-cell adhesion. May be necessary for the maintenance of normal elongate morphology during aggregation. This chain is Discoidin-1 subunit B/C (dscC-1), found in Dictyostelium discoideum (Social amoeba).